The chain runs to 225 residues: Small ribosomal subunit protein uS5 (225 aa).

The S5 DRBM domain occupies 57–120; the sequence is LEEQVLDVKL…AHAKLSLIKV (64 aa).

Belongs to the universal ribosomal protein uS5 family. As to quaternary structure, part of the 30S ribosomal subunit. Contacts protein S4.

Functionally, with S4 and S12 plays an important role in translational accuracy. This is Small ribosomal subunit protein uS5 from Methanococcus maripaludis (strain DSM 14266 / JCM 13030 / NBRC 101832 / S2 / LL).